The following is a 30-amino-acid chain: Snaclec coagulation factor IX/factor X-binding protein subunit B (30 aa).

Cys-2 and Cys-13 form a disulfide bridge. A C-type lectin domain is found at 9–30 (YEGHCYRVFTEPQNWADAEKFC).

It belongs to the snaclec family. Heterodimer of subunits A and B; disulfide-linked. Post-translationally, glycosylated. Expressed by the venom gland.

The protein resides in the secreted. In terms of biological role, anticoagulant protein which binds to the gamma-carboxyglutamic acid-domain regions of factors IX (F9) and factor X (F10) in the presence of calcium with a 1 to 1 stoichiometry. The sequence is that of Snaclec coagulation factor IX/factor X-binding protein subunit B from Bothrops jararaca (Jararaca).